The chain runs to 71 residues: Defensin 1 (71 aa).

Positions 1–25 (KTVAGFCIFFLVLFLAQEGVVKTEA) are cleaved as a signal peptide. Disulfide bonds link Cys28-Cys71, Cys39-Cys60, and Cys45-Cys65.

Belongs to the DEFL family. In terms of assembly, may form dimers. Not glycosylated. In terms of processing, contains 4 disulfide bonds. Post-translationally, met-61 and Met-63 might be oxidized in some molecules.

Its function is as follows. Probably has antifungal activity. The protein is Defensin 1 of Arachis hypogaea (Peanut).